The following is a 208-amino-acid chain: Probable transcriptional regulator ycf29 (208 aa).

The Response regulatory domain maps to 11-118 (KLILIEPEEH…ELIAIISNLI (108 aa)). D60 carries the post-translational modification 4-aspartylphosphate. Residues 146–208 (TSFSYINLTV…NRIQILSYFN (63 aa)) form the HTH luxR-type domain.

The protein resides in the plastid. The protein localises to the chloroplast. This Guillardia theta (Cryptophyte) protein is Probable transcriptional regulator ycf29 (ycf29).